Reading from the N-terminus, the 473-residue chain is Photosystem II CP43 reaction center protein (473 aa).

Positions 1–14 (MKTLYSLRRFYPVE) are excised as a propeptide. Position 15 is an N-acetylthreonine (threonine 15). Position 15 is a phosphothreonine (threonine 15). A run of 5 helical transmembrane segments spans residues 69–93 (LFEV…PHLA), 134–155 (LLGP…KDRN), 178–200 (KALY…RKIT), 255–275 (KPFA…LSYS), and 291–312 (WFNN…ASQA). Residue glutamate 367 participates in [CaMn4O5] cluster binding. A helical membrane pass occupies residues 447-471 (RARAAAAGFEKGIDRDFEPVLSMTP).

The protein belongs to the PsbB/PsbC family. PsbC subfamily. In terms of assembly, PSII is composed of 1 copy each of membrane proteins PsbA, PsbB, PsbC, PsbD, PsbE, PsbF, PsbH, PsbI, PsbJ, PsbK, PsbL, PsbM, PsbT, PsbX, PsbY, PsbZ, Psb30/Ycf12, at least 3 peripheral proteins of the oxygen-evolving complex and a large number of cofactors. It forms dimeric complexes. Binds multiple chlorophylls and provides some of the ligands for the Ca-4Mn-5O cluster of the oxygen-evolving complex. It may also provide a ligand for a Cl- that is required for oxygen evolution. PSII binds additional chlorophylls, carotenoids and specific lipids. is required as a cofactor.

The protein localises to the plastid. The protein resides in the chloroplast thylakoid membrane. Functionally, one of the components of the core complex of photosystem II (PSII). It binds chlorophyll and helps catalyze the primary light-induced photochemical processes of PSII. PSII is a light-driven water:plastoquinone oxidoreductase, using light energy to abstract electrons from H(2)O, generating O(2) and a proton gradient subsequently used for ATP formation. In Piper cenocladum (Ant piper), this protein is Photosystem II CP43 reaction center protein.